The primary structure comprises 234 residues: MKFSFVSLFPNLMEFYFQDSILARAKEKKLFKLNFYNPRDFSKNSYHKVDDYKIGGGAGLLMQAEPMYEVLRSIQEKKENPYFIFLNPSGKTFNQKDAKRLSKKEHIVFVCGRYEGIDERVLEIFANEIFSIGDFILTGGELPALVMCDAILRNVNGVLGNMESLKEESFENNLLEAPAFSKPFIFEKKNKKFYTPSEFLKGNHARIASLKTTLASCKTKFFRPDLFLEHERKK.

S-adenosyl-L-methionine-binding positions include Gly-112 and 132-137 (IGDFIL).

This sequence belongs to the RNA methyltransferase TrmD family. In terms of assembly, homodimer.

It localises to the cytoplasm. The catalysed reaction is guanosine(37) in tRNA + S-adenosyl-L-methionine = N(1)-methylguanosine(37) in tRNA + S-adenosyl-L-homocysteine + H(+). Specifically methylates guanosine-37 in various tRNAs. The sequence is that of tRNA (guanine-N(1)-)-methyltransferase from Campylobacter jejuni (strain RM1221).